Here is a 426-residue protein sequence, read N- to C-terminus: Glutamate-1-semialdehyde 2,1-aminomutase (426 aa).

N6-(pyridoxal phosphate)lysine is present on K265.

Belongs to the class-III pyridoxal-phosphate-dependent aminotransferase family. HemL subfamily. Homodimer. The cofactor is pyridoxal 5'-phosphate.

Its subcellular location is the cytoplasm. It catalyses the reaction (S)-4-amino-5-oxopentanoate = 5-aminolevulinate. It functions in the pathway porphyrin-containing compound metabolism; protoporphyrin-IX biosynthesis; 5-aminolevulinate from L-glutamyl-tRNA(Glu): step 2/2. The sequence is that of Glutamate-1-semialdehyde 2,1-aminomutase from Hydrogenovibrio crunogenus (strain DSM 25203 / XCL-2) (Thiomicrospira crunogena).